Here is a 411-residue protein sequence, read N- to C-terminus: L-cysteine:1D-myo-inositol 2-amino-2-deoxy-alpha-D-glucopyranoside ligase (411 aa).

Position 43 (Cys43) interacts with Zn(2+). L-cysteinyl-5'-AMP is bound by residues 43 to 46 (CGIT), Thr58, and 81 to 83 (NVT). The 'HIGH' region motif lies at 45-55 (ITPYDATHLGH). Positions 186–191 (QRGGDP) match the 'ERGGDP' region motif. Residue Trp226 coordinates L-cysteinyl-5'-AMP. Residue Cys230 coordinates Zn(2+). L-cysteinyl-5'-AMP is bound at residue 248–250 (GSD). Residue His255 coordinates Zn(2+). Ile282 serves as a coordination point for L-cysteinyl-5'-AMP. The 'KMSKS' region signature appears at 288–292 (KMSKS).

It belongs to the class-I aminoacyl-tRNA synthetase family. MshC subfamily. As to quaternary structure, monomer. The cofactor is Zn(2+).

It catalyses the reaction 1D-myo-inositol 2-amino-2-deoxy-alpha-D-glucopyranoside + L-cysteine + ATP = 1D-myo-inositol 2-(L-cysteinylamino)-2-deoxy-alpha-D-glucopyranoside + AMP + diphosphate + H(+). Its function is as follows. Catalyzes the ATP-dependent condensation of GlcN-Ins and L-cysteine to form L-Cys-GlcN-Ins. In Mycobacterium marinum (strain ATCC BAA-535 / M), this protein is L-cysteine:1D-myo-inositol 2-amino-2-deoxy-alpha-D-glucopyranoside ligase.